We begin with the raw amino-acid sequence, 280 residues long: 2-dehydro-3-deoxyphosphooctonate aldolase (280 aa).

The protein belongs to the KdsA family.

Its subcellular location is the cytoplasm. It carries out the reaction D-arabinose 5-phosphate + phosphoenolpyruvate + H2O = 3-deoxy-alpha-D-manno-2-octulosonate-8-phosphate + phosphate. It functions in the pathway carbohydrate biosynthesis; 3-deoxy-D-manno-octulosonate biosynthesis; 3-deoxy-D-manno-octulosonate from D-ribulose 5-phosphate: step 2/3. It participates in bacterial outer membrane biogenesis; lipopolysaccharide biosynthesis. The sequence is that of 2-dehydro-3-deoxyphosphooctonate aldolase from Coxiella burnetii (strain CbuG_Q212) (Coxiella burnetii (strain Q212)).